We begin with the raw amino-acid sequence, 191 residues long: Putative NADH dehydrogenase/NAD(P)H nitroreductase (191 aa).

127–132 (AAHSLG) serves as a coordination point for NAD(+).

The protein belongs to the nitroreductase family. FMN is required as a cofactor.

The polypeptide is Putative NADH dehydrogenase/NAD(P)H nitroreductase (Methanothermobacter thermautotrophicus (strain ATCC 29096 / DSM 1053 / JCM 10044 / NBRC 100330 / Delta H) (Methanobacterium thermoautotrophicum)).